A 237-amino-acid chain; its full sequence is Octopine transport system permease protein OccQ (237 aa).

An ABC transmembrane type-1 domain is found at 22–222 (TAMTMAVAFS…LITFVSGQVF (201 aa)). 4 helical membrane passes run 26–46 (MAVAFSGFTIGLVFGCLGAAA), 72–92 (LVIYLFYFGSSSVISNVASLF), 96–116 (GFVGASTFLIGALAIGVVSGA), and 202–222 (SFYLTAAALYLLITFVSGQVF).

Belongs to the binding-protein-dependent transport system permease family. HisMQ subfamily.

Its subcellular location is the cell inner membrane. Functionally, component of the octopine active transport system probably consisting of four subunits: Q, M, P and T. The polypeptide is Octopine transport system permease protein OccQ (occQ) (Agrobacterium tumefaciens (strain Ach5)).